Here is a 449-residue protein sequence, read N- to C-terminus: MTHIRFDYSKALSFFGEHELTYLRDAVKVAHHSLHEKTGVGNDFLGWLDLPVNYDKEEFARIQKAAAKIQADSDVLLVIGIGGSYLGARAAIEMLHHSFYNALPKEKRNTPQIIFVGNNISSTYMKEVMDLLEGKDFSINVISKSGTTTEPAIAFRIFRKLLEEKYGKEEARKRIYATTDRARGALKTLATAEGYETFIIPDDVGGRYSVLTAVGLLPIAVSGANIEEMMKGAAQAREDFSSSELEENAAYQYAAIRNILYNKGKTIELLINYEPALQYFAEWWKQLFGESEGKDQKGIFPASANFSTDLHSLGQYIQEGRRDLFETVLKVEKPRHDLVIEAEENDLDGLNYLAGKTVDFVNTKAFEGTLLAHTDGGVPNLVITLPELNEYTFGYLVYFFEKACAMSGYLLGVNPFDQPGVEAYKVNMFALLGKPGYEEKKAELEKRLK.

Phosphothreonine is present on threonine 38. Catalysis depends on glutamate 290, which acts as the Proton donor. Active-site residues include histidine 311 and lysine 425.

Belongs to the GPI family. Homodimer.

Its subcellular location is the cytoplasm. It catalyses the reaction alpha-D-glucose 6-phosphate = beta-D-fructose 6-phosphate. The protein operates within carbohydrate biosynthesis; gluconeogenesis. It functions in the pathway carbohydrate degradation; glycolysis; D-glyceraldehyde 3-phosphate and glycerone phosphate from D-glucose: step 2/4. Its function is as follows. Catalyzes the reversible isomerization of glucose-6-phosphate to fructose-6-phosphate. The protein is Glucose-6-phosphate isomerase 1 of Geobacillus stearothermophilus (Bacillus stearothermophilus).